The following is an 85-amino-acid chain: U4-theraphotoxin-Hhn1a (85 aa).

Positions 1–22 (MKVTLIAILTCAAVLVLHTTAA) are cleaved as a signal peptide. Residues 23–48 (EEFEAESQLMEVGMPDTELAAVDEER) constitute a propeptide that is removed on maturation. Intrachain disulfides connect Cys-52–Cys-66, Cys-56–Cys-77, and Cys-71–Cys-82.

Belongs to the neurotoxin 12 (Hwtx-2) family. 02 (Hwtx-2) subfamily. As to quaternary structure, monomer. Expressed by the venom gland.

Its subcellular location is the secreted. In terms of biological role, neurotoxin active on both insects and mammals. This chain is U4-theraphotoxin-Hhn1a, found in Cyriopagopus hainanus (Chinese bird spider).